The chain runs to 242 residues: Beta-glucanase (242 aa).

The signal sequence occupies residues 1 to 28 (MPYLKRVLLLLVTGLFMSLFAVTATASA). Position 29 is a pyrrolidone carboxylic acid (Gln29). Residues 29–242 (QTGGSFFDPF…HYDWVRYTKK (214 aa)) enclose the GH16 domain. Cys60 and Cys89 form a disulfide bridge. The active-site Nucleophile is Glu133. The active-site Proton donor is the Glu137.

It belongs to the glycosyl hydrolase 16 family.

The protein resides in the secreted. It catalyses the reaction Hydrolysis of (1-&gt;4)-beta-D-glucosidic linkages in beta-D-glucans containing (1-&gt;3)- and (1-&gt;4)-bonds.. The protein is Beta-glucanase (bglS) of Bacillus subtilis (strain 168).